The chain runs to 303 residues: Elongation factor Ts (303 aa).

The interval 80 to 83 (TDFV) is involved in Mg(2+) ion dislocation from EF-Tu.

Belongs to the EF-Ts family.

It is found in the cytoplasm. Its function is as follows. Associates with the EF-Tu.GDP complex and induces the exchange of GDP to GTP. It remains bound to the aminoacyl-tRNA.EF-Tu.GTP complex up to the GTP hydrolysis stage on the ribosome. In Clostridium botulinum (strain Eklund 17B / Type B), this protein is Elongation factor Ts.